The chain runs to 171 residues: tRNA-splicing endonuclease subunit Sen15 (171 aa).

A disordered region spans residues 1 to 35 (MEERGDSEPTPGCSGLGPGGVRGFGDGGGAPSWAP). S7 bears the Phosphoserine mark. The span at 14–30 (SGLGPGGVRGFGDGGGA) shows a compositional bias: gly residues. A Phosphoserine modification is found at S168.

The protein belongs to the SEN15 family. As to quaternary structure, homodimer. tRNA splicing endonuclease is a heterotetramer composed of TSEN2, TSEN15, TSEN34/LENG5 and TSEN54. tRNA splicing endonuclease complex also contains proteins of the Pre-mRNA 3' end processing machinery, such as CLP1, CPSF1, CPSF4 and CSTF2. As to expression, widely expressed. Highly expressed in testis and uterus.

The protein localises to the nucleus. It localises to the nucleolus. In terms of biological role, non-catalytic subunit of the tRNA-splicing endonuclease complex, a complex responsible for identification and cleavage of the splice sites in pre-tRNA. It cleaves pre-tRNA at the 5' and 3' splice sites to release the intron. The products are an intron and two tRNA half-molecules bearing 2',3' cyclic phosphate and 5'-OH termini. There are no conserved sequences at the splice sites, but the intron is invariably located at the same site in the gene, placing the splice sites an invariant distance from the constant structural features of the tRNA body. The tRNA splicing endonuclease is also involved in mRNA processing via its association with pre-mRNA 3'-end processing factors, establishing a link between pre-tRNA splicing and pre-mRNA 3'-end formation, suggesting that the endonuclease subunits function in multiple RNA-processing events. The protein is tRNA-splicing endonuclease subunit Sen15 (TSEN15) of Homo sapiens (Human).